The following is a 498-amino-acid chain: ATP synthase subunit alpha, chloroplastic (498 aa).

Residue 170–177 (GDRQTGKT) coordinates ATP.

Belongs to the ATPase alpha/beta chains family. In terms of assembly, F-type ATPases have 2 components, CF(1) - the catalytic core - and CF(0) - the membrane proton channel. CF(1) has five subunits: alpha(3), beta(3), gamma(1), delta(1), epsilon(1). CF(0) has four main subunits: a, b, b' and c.

It is found in the plastid. The protein localises to the chloroplast thylakoid membrane. The catalysed reaction is ATP + H2O + 4 H(+)(in) = ADP + phosphate + 5 H(+)(out). Its function is as follows. Produces ATP from ADP in the presence of a proton gradient across the membrane. The alpha chain is a regulatory subunit. The polypeptide is ATP synthase subunit alpha, chloroplastic (Oltmannsiellopsis viridis (Marine flagellate)).